The sequence spans 325 residues: Probable WRKY transcription factor 11 (325 aa).

Residues 240–306 constitute a DNA-binding region (WRKY); it reads KIADIPPDEY…YEGEHRHNQS (67 aa).

The protein belongs to the WRKY group II-d family. As to expression, in young, mature and senescent leaves.

The protein localises to the nucleus. In terms of biological role, transcription factor. Interacts specifically with the W box (5'-(T)TGAC[CT]-3'), a frequently occurring elicitor-responsive cis-acting element. Regulates rhizobacterium B.cereus AR156-induced systemic resistance (ISR) to P.syringae pv. tomato DC3000, probably by activating the jasmonic acid (JA)- signaling pathway. The sequence is that of Probable WRKY transcription factor 11 (WRKY11) from Arabidopsis thaliana (Mouse-ear cress).